The chain runs to 170 residues: Peptide deformylase (170 aa).

Fe cation contacts are provided by Cys-94 and His-136. Residue Glu-137 is part of the active site. Residue His-140 coordinates Fe cation.

It belongs to the polypeptide deformylase family. The cofactor is Fe(2+).

It carries out the reaction N-terminal N-formyl-L-methionyl-[peptide] + H2O = N-terminal L-methionyl-[peptide] + formate. In terms of biological role, removes the formyl group from the N-terminal Met of newly synthesized proteins. Requires at least a dipeptide for an efficient rate of reaction. N-terminal L-methionine is a prerequisite for activity but the enzyme has broad specificity at other positions. The chain is Peptide deformylase from Xylella fastidiosa (strain 9a5c).